The following is a 293-amino-acid chain: Probable porphobilinogen deaminase (293 aa).

Cysteine 233 bears the S-(dipyrrolylmethanemethyl)cysteine mark.

It belongs to the HMBS family. It depends on dipyrromethane as a cofactor.

The enzyme catalyses 4 porphobilinogen + H2O = hydroxymethylbilane + 4 NH4(+). It functions in the pathway porphyrin-containing compound metabolism; protoporphyrin-IX biosynthesis; coproporphyrinogen-III from 5-aminolevulinate: step 2/4. Tetrapolymerization of the monopyrrole PBG into the hydroxymethylbilane pre-uroporphyrinogen in several discrete steps. The chain is Probable porphobilinogen deaminase from Saccharolobus islandicus (strain L.S.2.15 / Lassen #1) (Sulfolobus islandicus).